Here is a 272-residue protein sequence, read N- to C-terminus: Putative phosphoenolpyruvate synthase regulatory protein (272 aa).

152-159 (GVSRCGKT) lines the ADP pocket.

The protein belongs to the pyruvate, phosphate/water dikinase regulatory protein family. PSRP subfamily.

It catalyses the reaction [pyruvate, water dikinase] + ADP = [pyruvate, water dikinase]-phosphate + AMP + H(+). The enzyme catalyses [pyruvate, water dikinase]-phosphate + phosphate + H(+) = [pyruvate, water dikinase] + diphosphate. Bifunctional serine/threonine kinase and phosphorylase involved in the regulation of the phosphoenolpyruvate synthase (PEPS) by catalyzing its phosphorylation/dephosphorylation. The protein is Putative phosphoenolpyruvate synthase regulatory protein of Stutzerimonas stutzeri (strain A1501) (Pseudomonas stutzeri).